Here is a 682-residue protein sequence, read N- to C-terminus: UvrABC system protein B (682 aa).

The 388-residue stretch at 27-414 folds into the Helicase ATP-binding domain; it reads DNIRAGVAHQ…SEGIVVEQII (388 aa). 40-47 is a binding site for ATP; sequence GVTGSGKT. The Beta-hairpin motif lies at 93-116; that stretch reads YYDYYQPEAYVPTSDTYIEKDSSI. Residues 432-594 form the Helicase C-terminal domain; it reads QMEDLMTECR…IEPVSVRKSL (163 aa). Positions 609–628 are disordered; it reads AAKGRGKGRGRQAAPAQTAA. The 36-residue stretch at 642–677 folds into the UVR domain; the sequence is GGLIQRLEREMRESARDLEFEKAAELRDRIRMLRER.

This sequence belongs to the UvrB family. In terms of assembly, forms a heterotetramer with UvrA during the search for lesions. Interacts with UvrC in an incision complex.

Its subcellular location is the cytoplasm. In terms of biological role, the UvrABC repair system catalyzes the recognition and processing of DNA lesions. A damage recognition complex composed of 2 UvrA and 2 UvrB subunits scans DNA for abnormalities. Upon binding of the UvrA(2)B(2) complex to a putative damaged site, the DNA wraps around one UvrB monomer. DNA wrap is dependent on ATP binding by UvrB and probably causes local melting of the DNA helix, facilitating insertion of UvrB beta-hairpin between the DNA strands. Then UvrB probes one DNA strand for the presence of a lesion. If a lesion is found the UvrA subunits dissociate and the UvrB-DNA preincision complex is formed. This complex is subsequently bound by UvrC and the second UvrB is released. If no lesion is found, the DNA wraps around the other UvrB subunit that will check the other stand for damage. This is UvrABC system protein B from Oleidesulfovibrio alaskensis (strain ATCC BAA-1058 / DSM 17464 / G20) (Desulfovibrio alaskensis).